We begin with the raw amino-acid sequence, 141 residues long: Large ribosomal subunit protein uL11 (141 aa).

It belongs to the universal ribosomal protein uL11 family. Part of the ribosomal stalk of the 50S ribosomal subunit. Interacts with L10 and the large rRNA to form the base of the stalk. L10 forms an elongated spine to which L12 dimers bind in a sequential fashion forming a multimeric L10(L12)X complex. In terms of processing, one or more lysine residues are methylated.

Functionally, forms part of the ribosomal stalk which helps the ribosome interact with GTP-bound translation factors. The polypeptide is Large ribosomal subunit protein uL11 (Ruminiclostridium cellulolyticum (strain ATCC 35319 / DSM 5812 / JCM 6584 / H10) (Clostridium cellulolyticum)).